The primary structure comprises 384 residues: Probable tRNA sulfurtransferase (384 aa).

Positions 57-160 constitute a THUMP domain; it reads EEVVDRVRNV…KKTYIYSKRI (104 aa). ATP-binding positions include 177-178, 202-203, Arg259, Gly281, and Gln290; these read ML and YF.

Belongs to the ThiI family.

It localises to the cytoplasm. It catalyses the reaction [ThiI sulfur-carrier protein]-S-sulfanyl-L-cysteine + a uridine in tRNA + 2 reduced [2Fe-2S]-[ferredoxin] + ATP + H(+) = [ThiI sulfur-carrier protein]-L-cysteine + a 4-thiouridine in tRNA + 2 oxidized [2Fe-2S]-[ferredoxin] + AMP + diphosphate. The catalysed reaction is [ThiS sulfur-carrier protein]-C-terminal Gly-Gly-AMP + S-sulfanyl-L-cysteinyl-[cysteine desulfurase] + AH2 = [ThiS sulfur-carrier protein]-C-terminal-Gly-aminoethanethioate + L-cysteinyl-[cysteine desulfurase] + A + AMP + 2 H(+). Its pathway is cofactor biosynthesis; thiamine diphosphate biosynthesis. Catalyzes the ATP-dependent transfer of a sulfur to tRNA to produce 4-thiouridine in position 8 of tRNAs, which functions as a near-UV photosensor. Also catalyzes the transfer of sulfur to the sulfur carrier protein ThiS, forming ThiS-thiocarboxylate. This is a step in the synthesis of thiazole, in the thiamine biosynthesis pathway. The sulfur is donated as persulfide by IscS. The chain is Probable tRNA sulfurtransferase from Clostridium acetobutylicum (strain ATCC 824 / DSM 792 / JCM 1419 / IAM 19013 / LMG 5710 / NBRC 13948 / NRRL B-527 / VKM B-1787 / 2291 / W).